Here is a 127-residue protein sequence, read N- to C-terminus: Ribosome-binding factor A (127 aa).

This sequence belongs to the RbfA family. In terms of assembly, monomer. Binds 30S ribosomal subunits, but not 50S ribosomal subunits or 70S ribosomes.

The protein localises to the cytoplasm. Its function is as follows. One of several proteins that assist in the late maturation steps of the functional core of the 30S ribosomal subunit. Associates with free 30S ribosomal subunits (but not with 30S subunits that are part of 70S ribosomes or polysomes). Required for efficient processing of 16S rRNA. May interact with the 5'-terminal helix region of 16S rRNA. This Glaesserella parasuis serovar 5 (strain SH0165) (Haemophilus parasuis) protein is Ribosome-binding factor A.